A 528-amino-acid polypeptide reads, in one-letter code: PC4 and SFRS1-interacting protein (528 aa).

Positions 7 to 64 (PGDLIFAKMKGYPHWPARVDEVPDGAVKPPTNKLPIFFFGTHETAFLGPKDIFPYSEN) constitute a PWWP domain. Lys75 participates in a covalent cross-link: Glycyl lysine isopeptide (Lys-Gly) (interchain with G-Cter in SUMO2). The disordered stretch occupies residues 86–347 (NNPKVKFSSQ…VEKKRETSMD (262 aa)). A compositionally biased stretch (polar residues) spans 92–106 (FSSQQVSTKQSNASS). Residues Ser102, Ser105, and Ser106 each carry the phosphoserine modification. Basic and acidic residues predominate over residues 113–135 (KETSVSKEDTDQEEKASNEDVTK). Phosphothreonine is present on residues Thr115 and Thr122. Ser129 is subject to Phosphoserine. Thr141 is modified (phosphothreonine). A compositionally biased stretch (basic residues) spans 144-153 (AARRGRKRKA). The short motif at 146–156 (RRGRKRKAEKQ) is the Nuclear localization signal element. A phosphoserine mark is found at Ser176 and Ser205. A compositionally biased stretch (basic and acidic residues) spans 212-260 (DEDKSKKKGPEEKPPKKQLKKEEEGQKEEEKPRKEPDKKEGKKEVESKR). At Ser270 the chain carries Phosphoserine. Thr271 bears the Phosphothreonine mark. Phosphoserine occurs at positions 272 and 274. Basic residues predominate over residues 285 to 300 (KRKGGRHFQAAHRRNM). A compositionally biased stretch (basic and acidic residues) spans 303 to 347 (GQHEKEAADRKRKQEEQMETEQQTKDEGKKPEVKKVEKKRETSMD). Coiled-coil stretches lie at residues 304–332 (QHEKEAADRKRKQEEQMETEQQTKDEGKK) and 369–393 (NRCIEALDELASLQVTMQQAQKHTE). An integrase-binding domain (IBD) region spans residues 338-415 (VEKKRETSMD…VSQVIMEKST (78 aa)). Ser432 carries the post-translational modification Phosphoserine. Residue Thr435 is modified to Phosphothreonine. Position 441 is a phosphoserine (Ser441). The segment covering 444–471 (EQRQHEEANKTKDQGKKGPNKKLEKEQT) has biased composition (basic and acidic residues). The disordered stretch occupies residues 444–528 (EQRQHEEANK…VSLKESTLDN (85 aa)). The span at 472-492 (GTKSLNGGSDAQESNHPQHNG) shows a compositional bias: polar residues. The span at 496-528 (EESKDSREAGSKTKTPGEEREAEVSLKESTLDN) shows a compositional bias: basic and acidic residues. Arg515 is modified (citrulline). Phosphoserine is present on Ser520. Thr525 carries the phosphothreonine modification.

The protein belongs to the HDGF family. Monomer. Interacts with IFRD1/PC4. Interacts (via IBD domain) with POGZ (via IBM motif) and CDCA7L (via IBM motifs). Interacts (via IBD domain) with KMT2A (via IBM motifs) with a moderate affinity whereas interacts with the KMT2A-MEN1 complex with a greater affinity; MEN1 enhances interaction of KMT2A with PSIP1. Interacts (via IBD domain) with IWS1 (via IBM motif), MED1 (via IBM motif) and DBF4 (via IBM motifs). Citrullinated by PADI4.

It localises to the nucleus. Transcriptional coactivator involved in neuroepithelial stem cell differentiation and neurogenesis. Involved in particular in lens epithelial cell gene regulation and stress responses. May play an important role in lens epithelial to fiber cell terminal differentiation. May play a protective role during stress-induced apoptosis. The sequence is that of PC4 and SFRS1-interacting protein (Psip1) from Rattus norvegicus (Rat).